The following is a 188-amino-acid chain: Ribonuclease HII (188 aa).

Positions 6 to 188 (KPLCGIDEAG…VKGLDEPTLF (183 aa)) constitute an RNase H type-2 domain. A divalent metal cation is bound by residues D12, E13, and D99.

Belongs to the RNase HII family. Mn(2+) serves as cofactor. Requires Mg(2+) as cofactor.

The protein localises to the cytoplasm. The enzyme catalyses Endonucleolytic cleavage to 5'-phosphomonoester.. In terms of biological role, endonuclease that specifically degrades the RNA of RNA-DNA hybrids. The chain is Ribonuclease HII from Sulfurovum sp. (strain NBC37-1).